A 168-amino-acid polypeptide reads, in one-letter code: Dihydrofolate reductase (168 aa).

Residues 1–164 (MIIGIWAEDE…YTFTIKKYEK (164 aa)) form the DHFR domain. 5–7 (IWA) is a substrate binding site. Residues 6–7 (WA) and 14–19 (IGEADK) each bind NADP(+). E27 provides a ligand contact to substrate. 43 to 46 (GRKT) is an NADP(+) binding site. R58 provides a ligand contact to substrate. NADP(+)-binding positions include 63 to 66 (LTRD) and 99 to 104 (TGGAEI). T118 is a substrate binding site.

This sequence belongs to the dihydrofolate reductase family.

It carries out the reaction (6S)-5,6,7,8-tetrahydrofolate + NADP(+) = 7,8-dihydrofolate + NADPH + H(+). The protein operates within cofactor biosynthesis; tetrahydrofolate biosynthesis; 5,6,7,8-tetrahydrofolate from 7,8-dihydrofolate: step 1/1. In terms of biological role, key enzyme in folate metabolism. Catalyzes an essential reaction for de novo glycine and purine synthesis, and for DNA precursor synthesis. The protein is Dihydrofolate reductase (folA) of Lactococcus lactis subsp. lactis (strain IL1403) (Streptococcus lactis).